Here is a 197-residue protein sequence, read N- to C-terminus: Imidazoleglycerol-phosphate dehydratase (197 aa).

This sequence belongs to the imidazoleglycerol-phosphate dehydratase family.

It localises to the cytoplasm. It catalyses the reaction D-erythro-1-(imidazol-4-yl)glycerol 3-phosphate = 3-(imidazol-4-yl)-2-oxopropyl phosphate + H2O. It functions in the pathway amino-acid biosynthesis; L-histidine biosynthesis; L-histidine from 5-phospho-alpha-D-ribose 1-diphosphate: step 6/9. The sequence is that of Imidazoleglycerol-phosphate dehydratase from Bradyrhizobium sp. (strain BTAi1 / ATCC BAA-1182).